Here is a 121-residue protein sequence, read N- to C-terminus: UPF0738 protein BLi01253/BL05110 (121 aa).

This sequence belongs to the UPF0738 family.

The chain is UPF0738 protein BLi01253/BL05110 from Bacillus licheniformis (strain ATCC 14580 / DSM 13 / JCM 2505 / CCUG 7422 / NBRC 12200 / NCIMB 9375 / NCTC 10341 / NRRL NRS-1264 / Gibson 46).